The following is a 319-amino-acid chain: 4-hydroxy-3-methylbut-2-enyl diphosphate reductase (319 aa).

A [4Fe-4S] cluster-binding site is contributed by C12. H41 and H74 together coordinate (2E)-4-hydroxy-3-methylbut-2-enyl diphosphate. Dimethylallyl diphosphate contacts are provided by H41 and H74. Isopentenyl diphosphate contacts are provided by H41 and H74. C96 is a [4Fe-4S] cluster binding site. H124 is a binding site for (2E)-4-hydroxy-3-methylbut-2-enyl diphosphate. Residue H124 participates in dimethylallyl diphosphate binding. H124 provides a ligand contact to isopentenyl diphosphate. E126 functions as the Proton donor in the catalytic mechanism. T167 contributes to the (2E)-4-hydroxy-3-methylbut-2-enyl diphosphate binding site. C197 lines the [4Fe-4S] cluster pocket. Residues S225, S226, N227, and S269 each coordinate (2E)-4-hydroxy-3-methylbut-2-enyl diphosphate. Residues S225, S226, N227, and S269 each coordinate dimethylallyl diphosphate. S225, S226, N227, and S269 together coordinate isopentenyl diphosphate.

The protein belongs to the IspH family. As to quaternary structure, homodimer. [4Fe-4S] cluster serves as cofactor.

It carries out the reaction isopentenyl diphosphate + 2 oxidized [2Fe-2S]-[ferredoxin] + H2O = (2E)-4-hydroxy-3-methylbut-2-enyl diphosphate + 2 reduced [2Fe-2S]-[ferredoxin] + 2 H(+). The enzyme catalyses dimethylallyl diphosphate + 2 oxidized [2Fe-2S]-[ferredoxin] + H2O = (2E)-4-hydroxy-3-methylbut-2-enyl diphosphate + 2 reduced [2Fe-2S]-[ferredoxin] + 2 H(+). Its pathway is isoprenoid biosynthesis; dimethylallyl diphosphate biosynthesis; dimethylallyl diphosphate from (2E)-4-hydroxy-3-methylbutenyl diphosphate: step 1/1. It participates in isoprenoid biosynthesis; isopentenyl diphosphate biosynthesis via DXP pathway; isopentenyl diphosphate from 1-deoxy-D-xylulose 5-phosphate: step 6/6. Its function is as follows. Catalyzes the conversion of 1-hydroxy-2-methyl-2-(E)-butenyl 4-diphosphate (HMBPP) into a mixture of isopentenyl diphosphate (IPP) and dimethylallyl diphosphate (DMAPP). Acts in the terminal step of the DOXP/MEP pathway for isoprenoid precursor biosynthesis. The protein is 4-hydroxy-3-methylbut-2-enyl diphosphate reductase of Buchnera aphidicola subsp. Acyrthosiphon pisum (strain Tuc7).